A 172-amino-acid chain; its full sequence is Small ribosomal subunit protein uS13 (172 aa).

Residues 131–172 (GQRTRTTGRTGVTVGVRRSKAAQAAQQQQKAQASSGGEKKQG) are disordered. Positions 134–163 (TRTTGRTGVTVGVRRSKAAQAAQQQQKAQA) are enriched in low complexity.

Belongs to the universal ribosomal protein uS13 family. As to quaternary structure, part of the 30S ribosomal subunit. Forms a loose heterodimer with protein S19. Forms two bridges to the 50S subunit in the 70S ribosome.

In terms of biological role, located at the top of the head of the 30S subunit, it contacts several helices of the 16S rRNA. In the 70S ribosome it contacts the 23S rRNA (bridge B1a) and protein L5 of the 50S subunit (bridge B1b), connecting the 2 subunits; these bridges are implicated in subunit movement. This is Small ribosomal subunit protein uS13 from Sulfurisphaera tokodaii (strain DSM 16993 / JCM 10545 / NBRC 100140 / 7) (Sulfolobus tokodaii).